We begin with the raw amino-acid sequence, 270 residues long: DNA repair protein RecO (270 aa).

Residues 202–221 are disordered; it reads PELPPSTIDADTDNPSQPPS.

Belongs to the RecO family.

Its function is as follows. Involved in DNA repair and RecF pathway recombination. The protein is DNA repair protein RecO of Rhodopirellula baltica (strain DSM 10527 / NCIMB 13988 / SH1).